We begin with the raw amino-acid sequence, 323 residues long: O-phosphoserine sulfhydrylase (323 aa).

Lys51 is modified (N6-(pyridoxal phosphate)lysine). Pyridoxal 5'-phosphate is bound by residues Asn81 and 184-188 (GTTGT). Residue Arg220 participates in substrate binding. Ser265 contacts pyridoxal 5'-phosphate.

The protein belongs to the cysteine synthase/cystathionine beta-synthase family. In terms of assembly, homodimer. Requires pyridoxal 5'-phosphate as cofactor.

The enzyme catalyses [CysO sulfur-carrier protein]-C-terminal-Gly-aminoethanethioate + O-phospho-L-serine + H(+) = [CysO sulfur-carrier protein]-Gly-NH-CH2-C(O)-S-L-Cys + phosphate. It participates in amino-acid biosynthesis; L-cysteine biosynthesis. Its function is as follows. Catalyzes the formation of a covalent CysO-cysteine adduct via a sulfur transfer, using the thiocarboxylated sulfur carrier protein CysO-COSH as sulfur donor and O-phospho-L-serine (OPS) as sulfur acceptor. Can also use sodium sulfide as sulfur donor in vitro, albeit with less efficiency. The chain is O-phosphoserine sulfhydrylase (cysM) from Mycobacterium bovis (strain ATCC BAA-935 / AF2122/97).